Consider the following 1019-residue polypeptide: MGDEIVIDKTAFFNRLSSFYAAWKADKRSTNSVFGGAGSIIILMGKTDEANSYQKNNAIHFWLLGYEFPATLFVFTPEVMYVVTTAKKAKHLEPLKGGKIPVEILVTTKDQEEKTRLFEKCVDIIKSAGNKVGILPRDTTTGPFVEDWKRVYGKISGDVEEVDISPALSAACFSVKDTDELVSIRNASRACSGLMSDYFVDEMSRLLDEEKQMTHKALSMRIDAKIDDAKFFNKLAKLPSEFDPQQIDWAYGPVIQSGGKYDLKLTAVSDDNNLEPGIIIAGFGIRYKTYSSIIGRTYLVDPTKSQEANYSLLLSVHEAVLKEARDGVVAKELYNKAIGIVRARKPELESHFVKNVGAGIGIELRDSNMILNGKNTRVLKSGMTFSITVGLVDVEEPSVKDKKKNVYSMMITDTVRVGEQGPHVFTKDAGIDMDSVSFYFGDEEEPQKPAKEKKETKSSAIASRNVTRTKLRAERPTQVNEGAEARRREHQKELAAKKTKEGLDRFAGTTGDDNGVTQKKFKRFESYKRDNQLPAKVKDLTVYVDHKASTVIVPVMGRPVPFHINTIKNASKSDEGEYAYLRINFLSPGQGVGRKDDQPFEDLSAHFLRNLTLRSKDNDRFAQVAQDITELRKNALRREQEKKEMEDVVEQDKLVEIRNRRPVKLPDVYLRPPLDGKRVPGEVEIHQNGLRYVSPFRNEHVDVLFSNVKHLFFQPCAHELIVLIHVHLKTPIMIGKRKTRDIQFYREATEMQFDETGNRRRKHRYGDEEEFEAEQEERRRRAALDREFKAFAEKIADAGKDEGVDVDIPFREIGFTGVPNRSNVLIQPTTDALVQLTEPPFLVISLNEIEIAHLERVQFGLKNFDLVFVFKDFHRAPVHINTIPVENLEGVKDWLDSVDIAYTEGPLNLNWTTIMKTVVSDPYGFFADGGWSFLAAESDSEDGSDEEEESAFELSESELAADESSEEDSDYDDDASADDDFSADEDESGEDWDELEHQAKKKDRESGLDDEDRGKKRKR.

The interval 443–498 (EEEPQKPAKEKKETKSSAIASRNVTRTKLRAERPTQVNEGAEARRREHQKELAAKK) is disordered. The segment covering 446–457 (PQKPAKEKKETK) has biased composition (basic and acidic residues). The span at 458 to 468 (SSAIASRNVTR) shows a compositional bias: polar residues. Coiled coils occupy residues 477 to 501 (TQVNEGAEARRREHQKELAAKKTKE) and 625 to 651 (AQDITELRKNALRREQEKKEMEDVVEQ). The span at 483–498 (AEARRREHQKELAAKK) shows a compositional bias: basic and acidic residues. Residues 755 to 774 (ETGNRRRKHRYGDEEEFEAE) form a disordered region. The stretch at 775 to 798 (QEERRRRAALDREFKAFAEKIADA) forms a coiled coil. The segment at 936 to 1019 (AESDSEDGSD…DEDRGKKRKR (84 aa)) is disordered. The segment covering 938–994 (SDSEDGSDEEEESAFELSESELAADESSEEDSDYDDDASADDDFSADEDESGEDWDE) has biased composition (acidic residues). Basic and acidic residues predominate over residues 995 to 1007 (LEHQAKKKDRESG).

The protein belongs to the peptidase M24 family. SPT16 subfamily. As to quaternary structure, forms a stable heterodimer with pob3. The spt16-pob3 dimer weakly associates with multiple molecules of nhp6 to form the FACT complex.

The protein localises to the nucleus. It localises to the chromosome. Component of the FACT complex, a general chromatin factor that acts to reorganize nucleosomes. The FACT complex is involved in multiple processes that require DNA as a template such as mRNA elongation, DNA replication and DNA repair. During transcription elongation the FACT complex acts as a histone chaperone that both destabilizes and restores nucleosomal structure. It facilitates the passage of RNA polymerase II and transcription by promoting the dissociation of one histone H2A-H2B dimer from the nucleosome, then subsequently promotes the reestablishment of the nucleosome following the passage of RNA polymerase II. The sequence is that of FACT complex subunit spt16 (spt16) from Emericella nidulans (strain FGSC A4 / ATCC 38163 / CBS 112.46 / NRRL 194 / M139) (Aspergillus nidulans).